Here is a 487-residue protein sequence, read N- to C-terminus: Catalase (487 aa).

The disordered stretch occupies residues 1-20 (MSQRVLTTESGAPVADNQNS). Residues histidine 54 and asparagine 127 contribute to the active site. Tyrosine 337 contributes to the heme binding site.

It belongs to the catalase family. The cofactor is heme.

It catalyses the reaction 2 H2O2 = O2 + 2 H2O. Functionally, decomposes hydrogen peroxide into water and oxygen; serves to protect cells from the toxic effects of hydrogen peroxide. In Streptomyces coelicolor (strain ATCC BAA-471 / A3(2) / M145), this protein is Catalase (katA).